The following is a 299-amino-acid chain: Peroxisomal biogenesis factor 19 (299 aa).

Residues 1–63 are disordered; it reads MAAAEEGCDA…SPGDTAKDAL (63 aa). Residue alanine 2 is modified to N-acetylalanine. Residues 2 to 56 are docking to the peroxisome membrane and binding to PEX3; the sequence is AAAEEGCDAGVEADRELEELLESALDDFDKAKPSPAPPPTTSAPDASGPQKKSPG. The necessary for PEX19 function on peroxisome biogenesis stretch occupies residues 2-91; that stretch reads AAAEEGCDAG…QATAEFEKAM (90 aa). A compositionally biased stretch (acidic residues) spans 16–27; it reads RELEELLESALD. Phosphoserine occurs at positions 35, 54, and 66. Threonine 236 is modified (phosphothreonine). At cysteine 296 the chain carries Cysteine methyl ester. Cysteine 296 carries S-farnesyl cysteine lipidation. The propeptide at 297–299 is removed in mature form; the sequence is LIM.

Belongs to the peroxin-19 family. In terms of assembly, interacts with a broad range of peroxisomal membrane proteins, including PEX3, PEX10, PEX11A, PEX11B, PEX12, PEX13, PEX14 and PEX16, PXMP2/PMP22, PXMP4/PMP24, SLC25A17/PMP34, ABCD1/ALDP, ABCD2/ALDRP, and ABCD3/PMP70. Also interacts with the tumor suppressor CDKN2A/p19ARF. In terms of tissue distribution, ubiquitous.

It is found in the cytoplasm. The protein localises to the peroxisome membrane. Functionally, necessary for early peroxisomal biogenesis. Acts both as a cytosolic chaperone and as an import receptor for peroxisomal membrane proteins (PMPs). Binds and stabilizes newly synthesized PMPs in the cytoplasm by interacting with their hydrophobic membrane-spanning domains, and targets them to the peroxisome membrane by binding to the integral membrane protein PEX3. Excludes CDKN2A from the nucleus and prevents its interaction with MDM2, which results in active degradation of TP53. This Cricetulus griseus (Chinese hamster) protein is Peroxisomal biogenesis factor 19 (PEX19).